Here is a 216-residue protein sequence, read N- to C-terminus: ATP-dependent Clp protease proteolytic subunit 1 (216 aa).

Residue serine 119 is the Nucleophile of the active site. The active site involves histidine 144.

It belongs to the peptidase S14 family. In terms of assembly, fourteen ClpP subunits assemble into 2 heptameric rings which stack back to back to give a disk-like structure with a central cavity, resembling the structure of eukaryotic proteasomes.

Its subcellular location is the cytoplasm. The catalysed reaction is Hydrolysis of proteins to small peptides in the presence of ATP and magnesium. alpha-casein is the usual test substrate. In the absence of ATP, only oligopeptides shorter than five residues are hydrolyzed (such as succinyl-Leu-Tyr-|-NHMec, and Leu-Tyr-Leu-|-Tyr-Trp, in which cleavage of the -Tyr-|-Leu- and -Tyr-|-Trp bonds also occurs).. Its function is as follows. Cleaves peptides in various proteins in a process that requires ATP hydrolysis. Has a chymotrypsin-like activity. Plays a major role in the degradation of misfolded proteins. The protein is ATP-dependent Clp protease proteolytic subunit 1 of Cutibacterium acnes (strain DSM 16379 / KPA171202) (Propionibacterium acnes).